A 770-amino-acid chain; its full sequence is Low-density lipoprotein receptor-related protein 3 (770 aa).

The first 36 residues, 1 to 36, serve as a signal peptide directing secretion; that stretch reads MEKRAAAGLEGAPGARAQLAVVCLVNIFLTGRLSSA. The Extracellular portion of the chain corresponds to 37–496; it reads VPALAACSGK…HGCLAAVPRK (460 aa). 9 cysteine pairs are disulfide-bonded: Cys-43-Cys-72, Cys-99-Cys-120, Cys-166-Cys-178, Cys-173-Cys-191, Cys-185-Cys-200, Cys-212-Cys-227, Cys-219-Cys-240, Cys-234-Cys-249, and Cys-254-Cys-282. A CUB 1 domain is found at 43–159; the sequence is CSGKLEQHTE…QGFRLSYIRG (117 aa). Residue Asn-71 is glycosylated (N-linked (GlcNAc...) asparagine). LDL-receptor class A domains follow at residues 165-201 and 211-250; these read SCQA…GNCS and LCPG…AGCP. An N-linked (GlcNAc...) asparagine glycan is attached at Asn-199. One can recognise a CUB 2 domain in the interval 254–365; it reads CGRRLGSFYG…HGFNATYQVK (112 aa). An N-linked (GlcNAc...) asparagine glycan is attached at Asn-359. 2 consecutive LDL-receptor class A domains span residues 415-453 and 454-490; these read ACPP…KNCF and SCQP…HGCL. Cystine bridges form between Cys-416–Cys-430, Cys-423–Cys-443, Cys-437–Cys-452, Cys-455–Cys-467, Cys-462–Cys-480, and Cys-474–Cys-489. A helical membrane pass occupies residues 497-517; sequence VITAALIGSLVCGLLLVIALG. Residues 518-770 lie on the Cytoplasmic side of the membrane; the sequence is CAFKLYSLRT…ASDDEALLVC (253 aa). Residues 635–770 form a disordered region; that stretch reads LGDGFLQPAP…ASDDEALLVC (136 aa). Basic and acidic residues predominate over residues 689–707; that stretch reads RDPECRPVDKDRKVCREPL. Residues 729–738 show a composition bias toward polar residues; that stretch reads QVSTASSTLG. Acidic residues predominate over residues 761–770; sequence ASDDEALLVC.

It belongs to the LDLR family. Binds GGA1 and GGA2. As to expression, widely expressed. Highly expressed in skeletal muscle and ovary. Expressed at intermediate level in heart, brain, liver, pancreas, prostate and small intestine. Weakly expressed in testis, colon and leukocyte.

It is found in the membrane. It localises to the coated pit. Its function is as follows. Probable receptor, which may be involved in the internalization of lipophilic molecules and/or signal transduction. Its precise role is however unclear, since it does not bind to very low density lipoprotein (VLDL) or to LRPAP1 in vitro. The protein is Low-density lipoprotein receptor-related protein 3 (LRP3) of Homo sapiens (Human).